The chain runs to 465 residues: E3 ubiquitin-protein ligase ORTHRUS-LIKE 1 (465 aa).

The interval 31–69 (TSLSSPLDRSGDVDPLPVSDESGGSKADESMTDADETKK) is disordered. The segment at 109-148 (CSLCNQLPDRPVTILCGHNFCLKCFDKWIDQGNQICATCR) adopts an RING-type zinc-finger fold. The 142-residue stretch at 233–374 (VRNQGVLVGE…FKVCRYLFVR (142 aa)) folds into the YDG domain. A helical membrane pass occupies residues 442–462 (MAMTCLLLFVLIILVGSSSIL).

The protein localises to the nucleus. The protein resides in the membrane. It carries out the reaction S-ubiquitinyl-[E2 ubiquitin-conjugating enzyme]-L-cysteine + [acceptor protein]-L-lysine = [E2 ubiquitin-conjugating enzyme]-L-cysteine + N(6)-ubiquitinyl-[acceptor protein]-L-lysine.. It functions in the pathway protein modification; protein ubiquitination. In terms of biological role, E3 ubiquitin-protein ligase. May participate in methylation-dependent transcriptional regulation. Mediates ubiquitination with the E2 ubiquitin-conjugating enzyme UBC11. In Arabidopsis thaliana (Mouse-ear cress), this protein is E3 ubiquitin-protein ligase ORTHRUS-LIKE 1 (ORTHL).